The primary structure comprises 459 residues: GTPase Der (459 aa).

2 EngA-type G domains span residues 4-169 (PLVA…PEVA) and 179-355 (IAVA…AAHR). Residues 10 to 17 (GRPNVGKS), 57 to 61 (DTGGL), 120 to 123 (NKCE), 185 to 192 (GRPNVGKS), 232 to 236 (DTAGI), and 297 to 300 (NKWD) each bind GTP. Residues 356 to 441 (KRIATSVVNE…PIRFRWRSKS (86 aa)) form the KH-like domain.

This sequence belongs to the TRAFAC class TrmE-Era-EngA-EngB-Septin-like GTPase superfamily. EngA (Der) GTPase family. As to quaternary structure, associates with the 50S ribosomal subunit.

Its function is as follows. GTPase that plays an essential role in the late steps of ribosome biogenesis. This is GTPase Der from Synechococcus sp. (strain JA-3-3Ab) (Cyanobacteria bacterium Yellowstone A-Prime).